Consider the following 122-residue polypeptide: Large ribosomal subunit protein uL18 (122 aa).

The protein belongs to the universal ribosomal protein uL18 family. As to quaternary structure, part of the 50S ribosomal subunit; part of the 5S rRNA/L5/L18/L25 subcomplex. Contacts the 5S and 23S rRNAs.

Functionally, this is one of the proteins that bind and probably mediate the attachment of the 5S RNA into the large ribosomal subunit, where it forms part of the central protuberance. In Desulfatibacillum aliphaticivorans, this protein is Large ribosomal subunit protein uL18.